Here is a 65-residue protein sequence, read N- to C-terminus: UPF0434 protein VFMJ11_A0475 (65 aa).

The protein belongs to the UPF0434 family.

The chain is UPF0434 protein VFMJ11_A0475 from Aliivibrio fischeri (strain MJ11) (Vibrio fischeri).